Consider the following 181-residue polypeptide: Protein Syd (181 aa).

This sequence belongs to the Syd family.

The protein resides in the cell inner membrane. Functionally, interacts with the SecY protein in vivo. May bind preferentially to an uncomplexed state of SecY, thus functioning either as a chelating agent for excess SecY in the cell or as a regulatory factor that negatively controls the translocase function. The chain is Protein Syd from Citrobacter koseri (strain ATCC BAA-895 / CDC 4225-83 / SGSC4696).